A 383-amino-acid polypeptide reads, in one-letter code: Succinyl-diaminopimelate desuccinylase (383 aa).

H69 contributes to the Zn(2+) binding site. D71 is an active-site residue. Zn(2+) is bound at residue D103. The active-site Proton acceptor is the E137. The Zn(2+) site is built by E138, E166, and H357.

The protein belongs to the peptidase M20A family. DapE subfamily. In terms of assembly, homodimer. The cofactor is Zn(2+). Requires Co(2+) as cofactor.

It catalyses the reaction N-succinyl-(2S,6S)-2,6-diaminopimelate + H2O = (2S,6S)-2,6-diaminopimelate + succinate. It participates in amino-acid biosynthesis; L-lysine biosynthesis via DAP pathway; LL-2,6-diaminopimelate from (S)-tetrahydrodipicolinate (succinylase route): step 3/3. In terms of biological role, catalyzes the hydrolysis of N-succinyl-L,L-diaminopimelic acid (SDAP), forming succinate and LL-2,6-diaminopimelate (DAP), an intermediate involved in the bacterial biosynthesis of lysine and meso-diaminopimelic acid, an essential component of bacterial cell walls. This chain is Succinyl-diaminopimelate desuccinylase, found in Rickettsia typhi (strain ATCC VR-144 / Wilmington).